The sequence spans 257 residues: Hydroxyethylthiazole kinase 1 (257 aa).

Substrate is bound at residue M41. Residues K117 and T162 each contribute to the ATP site. Residue G189 coordinates substrate.

This sequence belongs to the Thz kinase family. It depends on Mg(2+) as a cofactor.

It carries out the reaction 5-(2-hydroxyethyl)-4-methylthiazole + ATP = 4-methyl-5-(2-phosphooxyethyl)-thiazole + ADP + H(+). It participates in cofactor biosynthesis; thiamine diphosphate biosynthesis; 4-methyl-5-(2-phosphoethyl)-thiazole from 5-(2-hydroxyethyl)-4-methylthiazole: step 1/1. In terms of biological role, catalyzes the phosphorylation of the hydroxyl group of 4-methyl-5-beta-hydroxyethylthiazole (THZ). This chain is Hydroxyethylthiazole kinase 1, found in Oceanobacillus iheyensis (strain DSM 14371 / CIP 107618 / JCM 11309 / KCTC 3954 / HTE831).